The chain runs to 159 residues: Protein HydD (159 aa).

This sequence belongs to the peptidase A31 family.

In Wolinella succinogenes (strain ATCC 29543 / DSM 1740 / CCUG 13145 / JCM 31913 / LMG 7466 / NCTC 11488 / FDC 602W) (Vibrio succinogenes), this protein is Protein HydD (hydD).